A 303-amino-acid polypeptide reads, in one-letter code: tRNA pseudouridine synthase B (303 aa).

The active-site Nucleophile is Asp46.

This sequence belongs to the pseudouridine synthase TruB family. Type 1 subfamily.

It catalyses the reaction uridine(55) in tRNA = pseudouridine(55) in tRNA. In terms of biological role, responsible for synthesis of pseudouridine from uracil-55 in the psi GC loop of transfer RNAs. The sequence is that of tRNA pseudouridine synthase B from Hydrogenovibrio crunogenus (strain DSM 25203 / XCL-2) (Thiomicrospira crunogena).